A 664-amino-acid polypeptide reads, in one-letter code: Semaphorin-7A (664 aa).

The N-terminal stretch at 1–44 (MTPPPPGRAAPSAPRARVLSLPARFGLPLRLRLLLVFWVAAASA) is a signal peptide. The 436-residue stretch at 53 to 488 (RISAVWKGQD…SQWEVSQVPL (436 aa)) folds into the Sema domain. Asn-102 carries an N-linked (GlcNAc...) asparagine glycan. An intrachain disulfide couples Cys-117 to Cys-123. Position 132 is an asymmetric dimethylarginine (Arg-132). Residues Cys-140 and Cys-149 are joined by a disulfide bond. N-linked (GlcNAc...) asparagine glycosylation is found at Asn-154 and Asn-256. Intrachain disulfides connect Cys-264–Cys-364, Cys-289–Cys-333, Cys-491–Cys-509, Cys-498–Cys-539, Cys-501–Cys-516, Cys-564–Cys-611, and Cys-585–Cys-594. Residues 265–267 (RGD) form an interaction with integrins region. Positions 265-267 (RGD) match the Cell attachment site motif. N-linked (GlcNAc...) asparagine glycosylation is present at Asn-328. The 86-residue stretch at 542–627 (PKPDEAPLQK…YLREAQHWEL (86 aa)) folds into the Ig-like C2-type domain. N-linked (GlcNAc...) asparagine glycosylation occurs at Asn-600. Ala-646 is lipidated: GPI-anchor amidated alanine. A propeptide spans 647–664 (ASFWLGVLPTLILGLLVH) (removed in mature form).

Belongs to the semaphorin family. As to quaternary structure, interacts with PLXNC1. Interacts with ITGA1 and ITGB1. In terms of tissue distribution, highly expressed in activated T-cells (at protein level). Highest expression in brain. Lower in heart, thymus, spleen, testis and ovary. The expression increases in late embryonic and postnatal stages. Detected in T-cells.

The protein resides in the cell membrane. Functionally, plays an important role in integrin-mediated signaling and functions both in regulating cell migration and immune responses. Promotes formation of focal adhesion complexes, activation of the protein kinase PTK2/FAK1 and subsequent phosphorylation of MAPK1 and MAPK3. Promotes production of pro-inflammatory cytokines by monocytes and macrophages. Plays an important role in modulating inflammation and T-cell-mediated immune responses. Promotes axon growth in the embryonic olfactory bulb. Promotes attachment, spreading and dendrite outgrowth in melanocytes. The polypeptide is Semaphorin-7A (Sema7a) (Mus musculus (Mouse)).